The primary structure comprises 233 residues: MLTAKQHELIRFIQQRLEETGISPSFEEMKEALDLKSKSGVHRLISALEERGFIRRLPNRARALEILKQPEDVVGGGAKAAQSGSEASNVVDIRTAQAKTVPAPINDVVEIPLHGRIAAGAPIEALEDHQSLPVPAALLGPGDHYALEVSGDSMIEAGIFDGDFALIRRTDSARDGEIVVALVNNEEATLKYLHRDSGRVRLDPANASYEAQVYDPHQVQVQGKLAGLLRRYH.

A DNA-binding region (H-T-H motif) is located at residues 26-46 (FEEMKEALDLKSKSGVHRLIS). Active-site for autocatalytic cleavage activity residues include Ser153 and Lys191.

Belongs to the peptidase S24 family. Homodimer.

The catalysed reaction is Hydrolysis of Ala-|-Gly bond in repressor LexA.. In terms of biological role, represses a number of genes involved in the response to DNA damage (SOS response), including recA and lexA. In the presence of single-stranded DNA, RecA interacts with LexA causing an autocatalytic cleavage which disrupts the DNA-binding part of LexA, leading to derepression of the SOS regulon and eventually DNA repair. The polypeptide is LexA repressor (Erythrobacter litoralis (strain HTCC2594)).